Reading from the N-terminus, the 98-residue chain is Co-chaperonin GroES 1 (98 aa).

The protein belongs to the GroES chaperonin family. As to quaternary structure, heptamer of 7 subunits arranged in a ring. Interacts with the chaperonin GroEL.

The protein localises to the cytoplasm. In terms of biological role, together with the chaperonin GroEL, plays an essential role in assisting protein folding. The GroEL-GroES system forms a nano-cage that allows encapsulation of the non-native substrate proteins and provides a physical environment optimized to promote and accelerate protein folding. GroES binds to the apical surface of the GroEL ring, thereby capping the opening of the GroEL channel. The polypeptide is Co-chaperonin GroES 1 (Rhizobium meliloti (strain 1021) (Ensifer meliloti)).